Reading from the N-terminus, the 161-residue chain is Dihydrofolate reductase (161 aa).

A DHFR domain is found at 1-160; that stretch reads MTMVGLIWAQ…LRYRLYSYHR (160 aa). 7–9 contributes to the substrate binding site; it reads IWA. Residues 8–9 and 16–21 contribute to the NADP(+) site; these read WA and IGRGGD. Residues Asp29 and Arg34 each contribute to the substrate site. Residue 45-48 participates in NADP(+) binding; sequence GRRT. Position 62 (Arg62) interacts with substrate. Residues 67–70, Gly82, and 96–101 contribute to the NADP(+) site; these read LSRQ and IGGGQV. The substrate site is built by Tyr102 and Thr115.

The protein belongs to the dihydrofolate reductase family.

The catalysed reaction is (6S)-5,6,7,8-tetrahydrofolate + NADP(+) = 7,8-dihydrofolate + NADPH + H(+). The protein operates within cofactor biosynthesis; tetrahydrofolate biosynthesis; 5,6,7,8-tetrahydrofolate from 7,8-dihydrofolate: step 1/1. Key enzyme in folate metabolism. Catalyzes an essential reaction for de novo glycine and purine synthesis, and for DNA precursor synthesis. This chain is Dihydrofolate reductase (folA), found in Mycobacterium tuberculosis (strain CDC 1551 / Oshkosh).